The sequence spans 722 residues: Methionine--tRNA ligase (722 aa).

The short motif at 11 to 21 (PYANGPIHAGH) is the 'HIGH' region element. Residues cysteine 143, cysteine 146, cysteine 156, and cysteine 159 each contribute to the Zn(2+) site. A 'KMSKS' region motif is present at residues 344–348 (KFSTS). Residue threonine 347 coordinates ATP. One can recognise a tRNA-binding domain in the interval 622-722 (DFAKLDLRVG…KEVKLGAKVR (101 aa)).

Belongs to the class-I aminoacyl-tRNA synthetase family. MetG type 1 subfamily. As to quaternary structure, homodimer. Zn(2+) serves as cofactor.

The protein resides in the cytoplasm. The catalysed reaction is tRNA(Met) + L-methionine + ATP = L-methionyl-tRNA(Met) + AMP + diphosphate. In terms of biological role, is required not only for elongation of protein synthesis but also for the initiation of all mRNA translation through initiator tRNA(fMet) aminoacylation. This is Methionine--tRNA ligase from Pyrococcus abyssi (strain GE5 / Orsay).